A 947-amino-acid polypeptide reads, in one-letter code: Nonribosomal peptide synthetase ucdA (947 aa).

The adenylation (A) domain stretch occupies residues tyrosine 25 to phenylalanine 413. One can recognise a Carrier domain in the interval alanine 585–glutamine 665. Serine 623 is subject to O-(pantetheine 4'-phosphoryl)serine. The tract at residues proline 684–phenylalanine 934 is thioesterase (TE) domain.

Belongs to the NRP synthetase family.

The catalysed reaction is 2 3-(4-hydroxyphenyl)pyruvate + 2 ATP = atromentin + 2 AMP + 2 diphosphate + H(+). Its pathway is secondary metabolite biosynthesis. Nonribosomal peptide synthetase that mediates the biosynthesis of usterphenyllins and uscandidusins, p-terphenyl derivatives. Within the pathway, ucdA condenses two 4-hydroxyphenylpyruvate (HPPA) units to produce atromentin. UcdA first activates HPPA through its A domain to AMP-HPPA. The HPPA unit is then loaded to the T domain and eventually transferred to the TE domain. Another HPPA unit is then loaded onto the T domain. The TE domain then catalyzes the condensation of the two HPPA units and the release of atromentin via cyclization. The pathway begin with the biosynthesis of 4-hydroxyphenylpyruvate (HPPA) from L-tyrosine, possibly by the aminotransferase ucdG. The nonribosomal peptide synthetase ucdA then condenses two HPPA units to produce atromentin. The key step in this pathway is the reduction and dehydration of atromentin to form a terphenyl triol intermediate, performed by the NAD-dependent dehydrogenase ucdB. Further O-methylation by the methyltransferase ucdC forms terphenyllin carrying two methoxy moieties at C-9 and C-12, and subsequent dihydroxylation at C-3 of ring A and C-15 of ring C by the flavin-dependent oxygenase ucdD leads to 3,15-dihydroxyterphenyllin. Prenylation by ucdE at position C-5 of ring A forms usterphenyllin B, and is followed by a second prenylation at position C-14 of ring C to form usterphenyllin A. The following furan ring formation that leads to uscandidusins A and B was proven to be an unexpected spontaneous non-enzymatic reaction. The chain is Nonribosomal peptide synthetase ucdA from Aspergillus ustus.